Consider the following 238-residue polypeptide: Large ribosomal subunit protein uL1 (238 aa).

It belongs to the universal ribosomal protein uL1 family. Part of the 50S ribosomal subunit.

Functionally, binds directly to 23S rRNA. The L1 stalk is quite mobile in the ribosome, and is involved in E site tRNA release. In terms of biological role, protein L1 is also a translational repressor protein, it controls the translation of the L11 operon by binding to its mRNA. In Trichodesmium erythraeum (strain IMS101), this protein is Large ribosomal subunit protein uL1.